Here is a 427-residue protein sequence, read N- to C-terminus: Enolase (427 aa).

Gln-163 provides a ligand contact to (2R)-2-phosphoglycerate. Glu-205 serves as the catalytic Proton donor. Asp-242, Glu-285, and Asp-312 together coordinate Mg(2+). Positions 337, 366, 367, and 388 each coordinate (2R)-2-phosphoglycerate. Lys-337 functions as the Proton acceptor in the catalytic mechanism.

The protein belongs to the enolase family. Mg(2+) serves as cofactor.

It is found in the cytoplasm. It localises to the secreted. Its subcellular location is the cell surface. The catalysed reaction is (2R)-2-phosphoglycerate = phosphoenolpyruvate + H2O. Its pathway is carbohydrate degradation; glycolysis; pyruvate from D-glyceraldehyde 3-phosphate: step 4/5. Functionally, catalyzes the reversible conversion of 2-phosphoglycerate (2-PG) into phosphoenolpyruvate (PEP). It is essential for the degradation of carbohydrates via glycolysis. The protein is Enolase of Herminiimonas arsenicoxydans.